A 377-amino-acid chain; its full sequence is Cytoplasmic tRNA 2-thiolation protein 1 (377 aa).

This sequence belongs to the TtcA family. CTU1/NCS6/ATPBD3 subfamily.

The protein localises to the cytoplasm. It functions in the pathway tRNA modification; 5-methoxycarbonylmethyl-2-thiouridine-tRNA biosynthesis. Functionally, plays a central role in 2-thiolation of mcm(5)S(2)U at tRNA wobble positions of tRNA(Lys), tRNA(Glu) and tRNA(Gln). Directly binds tRNAs and probably acts by catalyzing adenylation of tRNAs, an intermediate required for 2-thiolation. It is unclear whether it acts as a sulfurtransferase that transfers sulfur from thiocarboxylated URM1 onto the uridine of tRNAs at wobble position. Prior mcm(5) tRNA modification by the elongator complex is required for 2-thiolation. May also be involved in protein urmylation. In Debaryomyces hansenii (strain ATCC 36239 / CBS 767 / BCRC 21394 / JCM 1990 / NBRC 0083 / IGC 2968) (Yeast), this protein is Cytoplasmic tRNA 2-thiolation protein 1.